The following is a 1014-amino-acid chain: Isoleucine--tRNA ligase (1014 aa).

A 'HIGH' region motif is present at residues 48-58 (PTANGRPGIHH). Residues 628-632 (KMSKS) carry the 'KMSKS' region motif. K631 serves as a coordination point for ATP.

It belongs to the class-I aminoacyl-tRNA synthetase family. IleS type 2 subfamily. In terms of assembly, monomer. Zn(2+) is required as a cofactor.

It is found in the cytoplasm. The catalysed reaction is tRNA(Ile) + L-isoleucine + ATP = L-isoleucyl-tRNA(Ile) + AMP + diphosphate. Catalyzes the attachment of isoleucine to tRNA(Ile). As IleRS can inadvertently accommodate and process structurally similar amino acids such as valine, to avoid such errors it has two additional distinct tRNA(Ile)-dependent editing activities. One activity is designated as 'pretransfer' editing and involves the hydrolysis of activated Val-AMP. The other activity is designated 'posttransfer' editing and involves deacylation of mischarged Val-tRNA(Ile). This is Isoleucine--tRNA ligase from Dehalococcoides mccartyi (strain CBDB1).